The sequence spans 302 residues: Bifunctional protein FolD (302 aa).

NADP(+)-binding positions include 165–167 (GRS), Ser-190, and Ile-231.

This sequence belongs to the tetrahydrofolate dehydrogenase/cyclohydrolase family. Homodimer.

The enzyme catalyses (6R)-5,10-methylene-5,6,7,8-tetrahydrofolate + NADP(+) = (6R)-5,10-methenyltetrahydrofolate + NADPH. It catalyses the reaction (6R)-5,10-methenyltetrahydrofolate + H2O = (6R)-10-formyltetrahydrofolate + H(+). Its pathway is one-carbon metabolism; tetrahydrofolate interconversion. Functionally, catalyzes the oxidation of 5,10-methylenetetrahydrofolate to 5,10-methenyltetrahydrofolate and then the hydrolysis of 5,10-methenyltetrahydrofolate to 10-formyltetrahydrofolate. This is Bifunctional protein FolD from Prochlorococcus marinus (strain SARG / CCMP1375 / SS120).